Consider the following 155-residue polypeptide: Ribosomal RNA large subunit methyltransferase H (155 aa).

S-adenosyl-L-methionine contacts are provided by residues L73, G104, and 123-128; that span reads LSPLTL.

The protein belongs to the RNA methyltransferase RlmH family. As to quaternary structure, homodimer.

The protein localises to the cytoplasm. The catalysed reaction is pseudouridine(1915) in 23S rRNA + S-adenosyl-L-methionine = N(3)-methylpseudouridine(1915) in 23S rRNA + S-adenosyl-L-homocysteine + H(+). Its function is as follows. Specifically methylates the pseudouridine at position 1915 (m3Psi1915) in 23S rRNA. The protein is Ribosomal RNA large subunit methyltransferase H of Pseudomonas entomophila (strain L48).